A 283-amino-acid polypeptide reads, in one-letter code: Elongation factor Ts (283 aa).

Residues 80-83 form an involved in Mg(2+) ion dislocation from EF-Tu region; sequence TDFV.

The protein belongs to the EF-Ts family.

It localises to the cytoplasm. Functionally, associates with the EF-Tu.GDP complex and induces the exchange of GDP to GTP. It remains bound to the aminoacyl-tRNA.EF-Tu.GTP complex up to the GTP hydrolysis stage on the ribosome. The protein is Elongation factor Ts of Cronobacter sakazakii (strain ATCC BAA-894) (Enterobacter sakazakii).